Reading from the N-terminus, the 140-residue chain is Active regulator of SIRT1 (140 aa).

Disordered stretches follow at residues 1–52 and 95–123; these read MSAS…KNKA and QQVLTQNRGRKSKDRPAEKKEKKKPEGTV. Over residues 108–120 the composition is skewed to basic and acidic residues; that stretch reads DRPAEKKEKKKPE.

Belongs to the AROS family. As to quaternary structure, part of the small subunit (SSU) processome, composed of more than 70 proteins and the RNA chaperone small nucleolar RNA (snoRNA) U3.

The protein resides in the nucleus. It is found in the nucleolus. Functionally, part of the small subunit (SSU) processome, first precursor of the small eukaryotic ribosomal subunit. During the assembly of the SSU processome in the nucleolus, many ribosome biogenesis factors, an RNA chaperone and ribosomal proteins associate with the nascent pre-rRNA and work in concert to generate RNA folding, modifications, rearrangements and cleavage as well as targeted degradation of pre-ribosomal RNA by the RNA exosome. Acts as a chaperone that specifically mediates the integration of RPS19 in state post-A1. Direct regulator of SIRT1. This Gallus gallus (Chicken) protein is Active regulator of SIRT1 (RPS19BP1).